The primary structure comprises 78 residues: Large ribosomal subunit protein bL28 (78 aa).

The protein belongs to the bacterial ribosomal protein bL28 family.

The sequence is that of Large ribosomal subunit protein bL28 from Prochlorococcus marinus (strain MIT 9515).